Here is a 504-residue protein sequence, read N- to C-terminus: Maturase K (504 aa).

The protein belongs to the intron maturase 2 family. MatK subfamily.

Its subcellular location is the plastid. The protein resides in the chloroplast. Functionally, usually encoded in the trnK tRNA gene intron. Probably assists in splicing its own and other chloroplast group II introns. The sequence is that of Maturase K from Arabidopsis thaliana (Mouse-ear cress).